A 312-amino-acid polypeptide reads, in one-letter code: DNA-directed RNA polymerase subunit alpha (312 aa).

Residues 1–229 (MLQYQIDRVD…ALFQPLATVT (229 aa)) form an alpha N-terminal domain (alpha-NTD) region. The interval 241 to 312 (SAESQIPLEE…ISLPQSRTTA (72 aa)) is alpha C-terminal domain (alpha-CTD).

It belongs to the RNA polymerase alpha chain family. In cyanobacteria the RNAP catalytic core is composed of 2 alpha, 1 beta, 1 beta', 1 gamma and 1 omega subunit. When a sigma factor is associated with the core the holoenzyme is formed, which can initiate transcription.

It carries out the reaction RNA(n) + a ribonucleoside 5'-triphosphate = RNA(n+1) + diphosphate. DNA-dependent RNA polymerase catalyzes the transcription of DNA into RNA using the four ribonucleoside triphosphates as substrates. In Synechococcus sp. (strain RCC307), this protein is DNA-directed RNA polymerase subunit alpha.